The chain runs to 100 residues: MTPLSPQARATLLAELPGWTDVDNRDAIQKRFTFPDFNAAFAFMTRVAIQAEKADHHPEWFNVYNRVDITLSTHDANGLTQRDIDLAHFIERAAASLRVE.

Belongs to the pterin-4-alpha-carbinolamine dehydratase family.

It carries out the reaction (4aS,6R)-4a-hydroxy-L-erythro-5,6,7,8-tetrahydrobiopterin = (6R)-L-erythro-6,7-dihydrobiopterin + H2O. The protein is Putative pterin-4-alpha-carbinolamine dehydratase 2 of Cupriavidus pinatubonensis (strain JMP 134 / LMG 1197) (Cupriavidus necator (strain JMP 134)).